A 257-amino-acid chain; its full sequence is Thiazole synthase (257 aa).

The active-site Schiff-base intermediate with DXP is the Lys96. 1-deoxy-D-xylulose 5-phosphate-binding positions include Gly157, 184–185 (AG), and 206–207 (NT).

Belongs to the ThiG family. In terms of assembly, homotetramer. Forms heterodimers with either ThiH or ThiS.

It localises to the cytoplasm. The enzyme catalyses [ThiS sulfur-carrier protein]-C-terminal-Gly-aminoethanethioate + 2-iminoacetate + 1-deoxy-D-xylulose 5-phosphate = [ThiS sulfur-carrier protein]-C-terminal Gly-Gly + 2-[(2R,5Z)-2-carboxy-4-methylthiazol-5(2H)-ylidene]ethyl phosphate + 2 H2O + H(+). It functions in the pathway cofactor biosynthesis; thiamine diphosphate biosynthesis. Functionally, catalyzes the rearrangement of 1-deoxy-D-xylulose 5-phosphate (DXP) to produce the thiazole phosphate moiety of thiamine. Sulfur is provided by the thiocarboxylate moiety of the carrier protein ThiS. In vitro, sulfur can be provided by H(2)S. The chain is Thiazole synthase from Bartonella quintana (strain Toulouse) (Rochalimaea quintana).